The following is a 411-amino-acid chain: MATINDNYLKLKAGYLFPEIARRVNTFAEAHPEAQIIKLGIGDVTEPLPKACIQAMTKAVAEMGDRSTFKGYGPEQGYAWLREKIAAQDFQGRGCDIDASEIFISDGSKCDSGNILDIIGNNNTIAVTDPVYPVYVDTNVMAGNTGAVNEKGEYEGLVYLPIRAENNFTAEIPTQKVDLIYLCFPNNPTGATATKEYLQTWVNYARANDAIILFDAAYEAFITDASLPHSIYEIEGAKECAIEFRSFSKNAGFTGTRCALTVVPKTLKGKAADGSDVELWKLWNRRQSTKFNGVSYIVQRGAEAVYSEEGKAQVKGLIQFYLENAKIICSQLQAAGLTVYGGVNAPYVWVQTPTGLSSWDFFDKLLQNCNVVGTPGSGFGAAGEGYFRISSFNSRENVNEAMKRITEKFKV.

Tyr-15 and Gly-42 together coordinate substrate. Pyridoxal 5'-phosphate-binding positions include Tyr-72, 108–109 (SK), Tyr-132, Asn-187, Tyr-218, and 246–248 (SFS). Residues Lys-109, Tyr-132, and Asn-187 each coordinate substrate. At Lys-249 the chain carries N6-(pyridoxal phosphate)lysine. 2 residues coordinate pyridoxal 5'-phosphate: Arg-257 and Asn-292. Substrate is bound by residues Asn-292 and Arg-388.

It belongs to the class-I pyridoxal-phosphate-dependent aminotransferase family. LL-diaminopimelate aminotransferase subfamily. As to quaternary structure, homodimer. The cofactor is pyridoxal 5'-phosphate.

It catalyses the reaction (2S,6S)-2,6-diaminopimelate + 2-oxoglutarate = (S)-2,3,4,5-tetrahydrodipicolinate + L-glutamate + H2O + H(+). It functions in the pathway amino-acid biosynthesis; L-lysine biosynthesis via DAP pathway; LL-2,6-diaminopimelate from (S)-tetrahydrodipicolinate (aminotransferase route): step 1/1. In terms of biological role, involved in the synthesis of meso-diaminopimelate (m-DAP or DL-DAP), required for both lysine and peptidoglycan biosynthesis. Catalyzes the direct conversion of tetrahydrodipicolinate to LL-diaminopimelate. The protein is LL-diaminopimelate aminotransferase of Trichodesmium erythraeum (strain IMS101).